We begin with the raw amino-acid sequence, 490 residues long: GTPase Der (490 aa).

EngA-type G domains follow at residues 1–165 (MRIA…QIPV) and 227–400 (LKVA…TIAT). GTP-binding positions include 7–14 (GRPNVGKS), 54–58 (DTGGV), 117–120 (NKAD), 233–240 (GHPNVGKS), 280–284 (DTAGL), and 345–348 (NKWD). The KH-like domain maps to 401 to 485 (TKLSTSLVNK…PFDLEYKAKP (85 aa)).

This sequence belongs to the TRAFAC class TrmE-Era-EngA-EngB-Septin-like GTPase superfamily. EngA (Der) GTPase family. In terms of assembly, associates with the 50S ribosomal subunit.

GTPase that plays an essential role in the late steps of ribosome biogenesis. This is GTPase Der from Chlamydia trachomatis serovar A (strain ATCC VR-571B / DSM 19440 / HAR-13).